Here is a 208-residue protein sequence, read N- to C-terminus: Large ribosomal subunit protein uL3 (208 aa).

The tract at residues 126–150 is disordered; the sequence is NQSRGPMAHGSRYHRRPGSMGPVAP.

This sequence belongs to the universal ribosomal protein uL3 family. As to quaternary structure, part of the 50S ribosomal subunit. Forms a cluster with proteins L14 and L19.

One of the primary rRNA binding proteins, it binds directly near the 3'-end of the 23S rRNA, where it nucleates assembly of the 50S subunit. The sequence is that of Large ribosomal subunit protein uL3 from Exiguobacterium sibiricum (strain DSM 17290 / CCUG 55495 / CIP 109462 / JCM 13490 / 255-15).